The following is a 326-amino-acid chain: Small ribosomal subunit protein RACK1x (326 aa).

WD repeat units lie at residues 13–53, 61–100, 103–142, 147–188, 191–230, 232–270, and 290–326; these read AHTD…KSYG, GHSHFVEDVVLSSDGQFALSGSWDGELRLWDLATGETTRR, GHTKDVLSVAFSTDNRQIVSASRDRTIKLWNTLGECKYTI, GHKE…LRNS, GHSGYLNTVAVSPDGSLCASGGKDGVILLWDLAEGKKLYS, EAGSIIHSLCFSPNRYWLCAATENSIRIWDLESKSVVED, and NQKKVIYCTSLNWSADGSTLFSGYTDGVVRVWGIGRY.

This sequence belongs to the WD repeat G protein beta family. Ribosomal protein RACK1 subfamily. In terms of assembly, homodimer and heterodimer with RACK1A or RACK1B. Interacts with GB1, MEKK1, MKK4, MKK5, MPK3 and MPK6, but not with GPA1 or MPK4. As to expression, widely expressed.

Functionally, minor component of the RACK1 regulatory proteins that play a role in multiple signal transduction pathways. Involved in multiple hormone responses and developmental processes. MAPK cascade scaffolding protein involved in the protease IV and ArgC signaling pathway but not the flg22 pathway. The polypeptide is Small ribosomal subunit protein RACK1x (Arabidopsis thaliana (Mouse-ear cress)).